The chain runs to 77 residues: Large ribosomal subunit protein uL24c (77 aa).

Belongs to the universal ribosomal protein uL24 family. In terms of assembly, part of the 50S ribosomal subunit.

It localises to the plastid. Its subcellular location is the chloroplast. Functionally, one of two assembly initiator proteins, it binds directly to the 5'-end of the 23S rRNA, where it nucleates assembly of the 50S subunit. This is Large ribosomal subunit protein uL24c (rpl24) from Trieres chinensis (Marine centric diatom).